The following is a 386-amino-acid chain: Bifunctional enzyme IspD/IspF (386 aa).

A 2-C-methyl-D-erythritol 4-phosphate cytidylyltransferase region spans residues 1–229; the sequence is MIRGERVIGI…RARALLEAPV (229 aa). A 2-C-methyl-D-erythritol 2,4-cyclodiphosphate synthase region spans residues 230–386; that stretch reads ATGVGYDTHR…AIALLVRAAG (157 aa). Residues Asp236 and His238 each coordinate a divalent metal cation. 4-CDP-2-C-methyl-D-erythritol 2-phosphate is bound by residues 236–238 and 261–262; these read DTH and HS. Position 269 (His269) interacts with a divalent metal cation. 4-CDP-2-C-methyl-D-erythritol 2-phosphate-binding positions include 283–285, 288–292, 359–362, Phe366, and Arg369; these read DLG, FPDTD, and TTGE.

In the N-terminal section; belongs to the IspD/TarI cytidylyltransferase family. IspD subfamily. The protein in the C-terminal section; belongs to the IspF family. Requires a divalent metal cation as cofactor.

It catalyses the reaction 2-C-methyl-D-erythritol 4-phosphate + CTP + H(+) = 4-CDP-2-C-methyl-D-erythritol + diphosphate. It carries out the reaction 4-CDP-2-C-methyl-D-erythritol 2-phosphate = 2-C-methyl-D-erythritol 2,4-cyclic diphosphate + CMP. The protein operates within isoprenoid biosynthesis; isopentenyl diphosphate biosynthesis via DXP pathway; isopentenyl diphosphate from 1-deoxy-D-xylulose 5-phosphate: step 2/6. It functions in the pathway isoprenoid biosynthesis; isopentenyl diphosphate biosynthesis via DXP pathway; isopentenyl diphosphate from 1-deoxy-D-xylulose 5-phosphate: step 4/6. In terms of biological role, bifunctional enzyme that catalyzes the formation of 4-diphosphocytidyl-2-C-methyl-D-erythritol from CTP and 2-C-methyl-D-erythritol 4-phosphate (MEP) (IspD), and catalyzes the conversion of 4-diphosphocytidyl-2-C-methyl-D-erythritol 2-phosphate (CDP-ME2P) to 2-C-methyl-D-erythritol 2,4-cyclodiphosphate (ME-CPP) with a corresponding release of cytidine 5-monophosphate (CMP) (IspF). The polypeptide is Bifunctional enzyme IspD/IspF (Anaeromyxobacter dehalogenans (strain 2CP-C)).